The following is a 264-amino-acid chain: Thymidylate synthase (264 aa).

Residue R21 participates in dUMP binding. H51 is a binding site for (6R)-5,10-methylene-5,6,7,8-tetrahydrofolate. 126–127 (RR) provides a ligand contact to dUMP. The active-site Nucleophile is the C146. DUMP-binding positions include 166 to 169 (RSAD), N177, and 207 to 209 (HLY). Residue D169 participates in (6R)-5,10-methylene-5,6,7,8-tetrahydrofolate binding. A (6R)-5,10-methylene-5,6,7,8-tetrahydrofolate-binding site is contributed by A263.

This sequence belongs to the thymidylate synthase family. Bacterial-type ThyA subfamily. Homodimer.

The protein resides in the cytoplasm. The catalysed reaction is dUMP + (6R)-5,10-methylene-5,6,7,8-tetrahydrofolate = 7,8-dihydrofolate + dTMP. It functions in the pathway pyrimidine metabolism; dTTP biosynthesis. In terms of biological role, catalyzes the reductive methylation of 2'-deoxyuridine-5'-monophosphate (dUMP) to 2'-deoxythymidine-5'-monophosphate (dTMP) while utilizing 5,10-methylenetetrahydrofolate (mTHF) as the methyl donor and reductant in the reaction, yielding dihydrofolate (DHF) as a by-product. This enzymatic reaction provides an intracellular de novo source of dTMP, an essential precursor for DNA biosynthesis. The sequence is that of Thymidylate synthase from Bartonella tribocorum (strain CIP 105476 / IBS 506).